Consider the following 227-residue polypeptide: Small ribosomal subunit protein uS3 (227 aa).

The 71-residue stretch at 24–94 (LDEYLEEELG…RVSIEVKELP (71 aa)) folds into the KH type-2 domain. The tract at residues 207-227 (EEVEDELKELIGKSEDEAEGA) is disordered.

The protein belongs to the universal ribosomal protein uS3 family. As to quaternary structure, part of the 30S ribosomal subunit.

Its function is as follows. Binds the lower part of the 30S subunit head. In Methanopyrus kandleri (strain AV19 / DSM 6324 / JCM 9639 / NBRC 100938), this protein is Small ribosomal subunit protein uS3.